Here is a 490-residue protein sequence, read N- to C-terminus: ATP-dependent 6-phosphofructokinase (490 aa).

Residues Gly109, 175–176 (RG), and 200–203 (GDGT) each bind ATP. Position 201 (Asp201) interacts with Mg(2+). Substrate-binding positions include 229 to 231 (TID), 274 to 276 (MGR), Glu327, and 383 to 386 (YMIR). The active-site Proton acceptor is the Asp231. The Peroxisomal targeting signal motif lies at 488–490 (SKL).

Belongs to the phosphofructokinase type A (PFKA) family. PPi-dependent PFK group II subfamily. Atypical ATP-dependent clade 'X' sub-subfamily. In terms of assembly, homotetramer. Mg(2+) is required as a cofactor.

The protein localises to the glycosome. It catalyses the reaction beta-D-fructose 6-phosphate + ATP = beta-D-fructose 1,6-bisphosphate + ADP + H(+). It participates in carbohydrate degradation; glycolysis; D-glyceraldehyde 3-phosphate and glycerone phosphate from D-glucose: step 3/4. Allosterically activated by AMP. Functionally, catalyzes the phosphorylation of D-fructose 6-phosphate to fructose 1,6-bisphosphate by ATP, the first committing step of glycolysis. The sequence is that of ATP-dependent 6-phosphofructokinase from Trypanoplasma borreli.